Here is a 407-residue protein sequence, read N- to C-terminus: 1-deoxy-D-xylulose 5-phosphate reductoisomerase (407 aa).

Residues Thr-25, Gly-26, Ser-27, Ile-28, Asn-53, and Asn-136 each coordinate NADPH. Lys-137 contributes to the 1-deoxy-D-xylulose 5-phosphate binding site. Glu-138 is a binding site for NADPH. Position 162 (Asp-162) interacts with Mn(2+). Positions 163, 164, 188, and 211 each coordinate 1-deoxy-D-xylulose 5-phosphate. A Mn(2+)-binding site is contributed by Glu-164. Position 217 (Gly-217) interacts with NADPH. 1-deoxy-D-xylulose 5-phosphate contacts are provided by Ser-224, Asn-229, Lys-230, and Glu-233. Glu-233 is a binding site for Mn(2+).

It belongs to the DXR family. It depends on Mg(2+) as a cofactor. Mn(2+) is required as a cofactor.

It catalyses the reaction 2-C-methyl-D-erythritol 4-phosphate + NADP(+) = 1-deoxy-D-xylulose 5-phosphate + NADPH + H(+). It functions in the pathway isoprenoid biosynthesis; isopentenyl diphosphate biosynthesis via DXP pathway; isopentenyl diphosphate from 1-deoxy-D-xylulose 5-phosphate: step 1/6. In terms of biological role, catalyzes the NADPH-dependent rearrangement and reduction of 1-deoxy-D-xylulose-5-phosphate (DXP) to 2-C-methyl-D-erythritol 4-phosphate (MEP). The sequence is that of 1-deoxy-D-xylulose 5-phosphate reductoisomerase from Rhodopseudomonas palustris (strain BisB5).